Consider the following 466-residue polypeptide: 3-isopropylmalate dehydratase large subunit (466 aa).

[4Fe-4S] cluster contacts are provided by C347, C407, and C410.

Belongs to the aconitase/IPM isomerase family. LeuC type 1 subfamily. Heterodimer of LeuC and LeuD. The cofactor is [4Fe-4S] cluster.

It carries out the reaction (2R,3S)-3-isopropylmalate = (2S)-2-isopropylmalate. It participates in amino-acid biosynthesis; L-leucine biosynthesis; L-leucine from 3-methyl-2-oxobutanoate: step 2/4. Catalyzes the isomerization between 2-isopropylmalate and 3-isopropylmalate, via the formation of 2-isopropylmaleate. This Acidiphilium cryptum (strain JF-5) protein is 3-isopropylmalate dehydratase large subunit.